The following is a 704-amino-acid chain: Non-sulfated chondroitin lyase E66 (704 aa).

Positions M1–S23 are cleaved as a signal peptide. Residues N236 and H291 each act as proton acceptor in the active site. Y299 (proton donor) is an active-site residue.

The protein belongs to the baculoviridae E66 family.

The protein localises to the virion membrane. Its subcellular location is the host nucleus. The protein resides in the host cytoplasm. Functionally, component of the polyhedra envelope. Plays an essential role in oral infectivity. May digest, with its chondroitin lyase activity, the chondroitin sulfate barrier of the peritrophic matrix of the host midgut to facilitate viral infection in the epithelial cells. The sequence is that of Non-sulfated chondroitin lyase E66 (P79) from Lepidoptera (butterflies and moths).